A 730-amino-acid chain; its full sequence is Polyphosphate kinase (730 aa).

The segment covering 1 to 21 has biased composition (basic and acidic residues); sequence MMRHDRNVTEIDAETRPDENL. Residues 1–39 are disordered; it reads MMRHDRNVTEIDAETRPDENLWHSGDSAVGAPPAATPAA. Asn86 provides a ligand contact to ATP. Arg423 and Arg453 together coordinate Mg(2+). Catalysis depends on His483, which acts as the Phosphohistidine intermediate. The ATP site is built by Tyr516, Arg612, and His640.

It belongs to the polyphosphate kinase 1 (PPK1) family. It depends on Mg(2+) as a cofactor. In terms of processing, an intermediate of this reaction is the autophosphorylated ppk in which a phosphate is covalently linked to a histidine residue through a N-P bond.

It catalyses the reaction [phosphate](n) + ATP = [phosphate](n+1) + ADP. In terms of biological role, catalyzes the reversible transfer of the terminal phosphate of ATP to form a long-chain polyphosphate (polyP). The protein is Polyphosphate kinase of Mycolicibacterium paratuberculosis (strain ATCC BAA-968 / K-10) (Mycobacterium paratuberculosis).